A 547-amino-acid polypeptide reads, in one-letter code: Glucose-6-phosphate isomerase (547 aa).

Residue Glu353 is the Proton donor of the active site. Residues His384 and Lys512 contribute to the active site.

It belongs to the GPI family.

It is found in the cytoplasm. It carries out the reaction alpha-D-glucose 6-phosphate = beta-D-fructose 6-phosphate. Its pathway is carbohydrate biosynthesis; gluconeogenesis. It participates in carbohydrate degradation; glycolysis; D-glyceraldehyde 3-phosphate and glycerone phosphate from D-glucose: step 2/4. Catalyzes the reversible isomerization of glucose-6-phosphate to fructose-6-phosphate. This Pseudoalteromonas atlantica (strain T6c / ATCC BAA-1087) protein is Glucose-6-phosphate isomerase.